The following is a 104-amino-acid chain: Zinc finger C2H2 protein ECU02_0310 (104 aa).

The segment at 56–80 adopts a C2H2-type zinc-finger fold; it reads FYCCECDRHFITEKVLMEHKRSNPH.

This sequence belongs to the ZNF593/BUD20 C2H2-type zinc-finger protein family. Associates with pre-60S ribosomal particles; released from the pre-60S particle very early in the cytoplasm.

It localises to the nucleus. The protein localises to the cytoplasm. Its function is as follows. Involved in pre-60S ribosomal particles maturation by promoting the nuclear export of the 60S ribosome. This Encephalitozoon cuniculi (strain GB-M1) (Microsporidian parasite) protein is Zinc finger C2H2 protein ECU02_0310.